Consider the following 425-residue polypeptide: Tryptophan synthase beta chain (425 aa).

Lys-107 carries the post-translational modification N6-(pyridoxal phosphate)lysine.

It belongs to the TrpB family. As to quaternary structure, tetramer of two alpha and two beta chains. The cofactor is pyridoxal 5'-phosphate.

It carries out the reaction (1S,2R)-1-C-(indol-3-yl)glycerol 3-phosphate + L-serine = D-glyceraldehyde 3-phosphate + L-tryptophan + H2O. Its pathway is amino-acid biosynthesis; L-tryptophan biosynthesis; L-tryptophan from chorismate: step 5/5. Its function is as follows. The beta subunit is responsible for the synthesis of L-tryptophan from indole and L-serine. This chain is Tryptophan synthase beta chain, found in Synechococcus sp. (strain JA-2-3B'a(2-13)) (Cyanobacteria bacterium Yellowstone B-Prime).